A 392-amino-acid polypeptide reads, in one-letter code: Protein O-glucosyltransferase 1 (392 aa).

Positions 1–23 are cleaved as a signal peptide; that stretch reads MERRAGSRLRAWMLLLLLCPVQG. 4 disulfide bridges follow: cysteine 49–cysteine 56, cysteine 54–cysteine 357, cysteine 102–cysteine 108, and cysteine 263–cysteine 286. A glycan (N-linked (GlcNAc...) asparagine) is linked at asparagine 53. Positions 103–107 are interaction with the consensus sequence C-X-S-X-[PA]-C in peptide substrates; it reads MFPSR. The active-site Proton donor/acceptor is the aspartate 133. Residues 172–178 are interaction with the consensus sequence C-X-S-X-[PA]-C in peptide substrates; the sequence is AVWPLYP. Tyrosine 177 serves as a coordination point for UDP-alpha-D-glucose. Asparagine 204 carries N-linked (GlcNAc...) asparagine glycosylation. UDP-alpha-D-glucose is bound by residues serine 212, arginine 218, and 274–279; that span reads VAASFR. A glycan (N-linked (GlcNAc...) asparagine) is linked at asparagine 373. The Prevents secretion from ER motif lies at 389–392; it reads KTEL.

This sequence belongs to the glycosyltransferase 90 family. Widely expressed in newborn and adult tissues (at protein level).

The protein localises to the endoplasmic reticulum lumen. It carries out the reaction L-seryl-[EGF-like domain protein] + UDP-alpha-D-xylose = 3-O-(beta-D-xylosyl)-L-seryl-[EGF-like domain protein] + UDP + H(+). The enzyme catalyses L-seryl-[EGF-like domain protein] + UDP-alpha-D-glucose = 3-O-(beta-D-glucosyl)-L-seryl-[EGF-like domain protein] + UDP + H(+). It participates in protein modification; protein glycosylation. Functionally, dual specificity glycosyltransferase that catalyzes the transfer of glucose and xylose from UDP-glucose and UDP-xylose, respectively, to a serine residue found in the consensus sequence of C-X-S-X-P-C. Specifically targets extracellular EGF repeats of protein such as CRB2, F7, F9 and NOTCH2. Acts as a positive regulator of Notch signaling by mediating O-glucosylation of Notch, leading to regulate muscle development. Notch glucosylation does not affect Notch ligand binding. Required during early development to promote gastrulation: acts by mediating O-glucosylation of CRB2, which is required for CRB2 localization to the cell membrane. The protein is Protein O-glucosyltransferase 1 of Mus musculus (Mouse).